The sequence spans 296 residues: Lipoyl synthase (296 aa).

[4Fe-4S] cluster contacts are provided by Cys37, Cys42, Cys48, Cys63, Cys67, Cys70, and Ser276. The 217-residue stretch at 49–265 (WSKKHTTVMI…ERVAKTKGFL (217 aa)) folds into the Radical SAM core domain.

It belongs to the radical SAM superfamily. Lipoyl synthase family. [4Fe-4S] cluster is required as a cofactor.

It is found in the cytoplasm. The catalysed reaction is [[Fe-S] cluster scaffold protein carrying a second [4Fe-4S](2+) cluster] + N(6)-octanoyl-L-lysyl-[protein] + 2 oxidized [2Fe-2S]-[ferredoxin] + 2 S-adenosyl-L-methionine + 4 H(+) = [[Fe-S] cluster scaffold protein] + N(6)-[(R)-dihydrolipoyl]-L-lysyl-[protein] + 4 Fe(3+) + 2 hydrogen sulfide + 2 5'-deoxyadenosine + 2 L-methionine + 2 reduced [2Fe-2S]-[ferredoxin]. The protein operates within protein modification; protein lipoylation via endogenous pathway; protein N(6)-(lipoyl)lysine from octanoyl-[acyl-carrier-protein]: step 2/2. In terms of biological role, catalyzes the radical-mediated insertion of two sulfur atoms into the C-6 and C-8 positions of the octanoyl moiety bound to the lipoyl domains of lipoate-dependent enzymes, thereby converting the octanoylated domains into lipoylated derivatives. The protein is Lipoyl synthase of Rickettsia conorii (strain ATCC VR-613 / Malish 7).